Here is a 494-residue protein sequence, read N- to C-terminus: Guanosine-5'-triphosphate,3'-diphosphate pyrophosphatase (494 aa).

The protein belongs to the GppA/Ppx family. GppA subfamily.

The enzyme catalyses guanosine 3'-diphosphate 5'-triphosphate + H2O = guanosine 3',5'-bis(diphosphate) + phosphate + H(+). The protein operates within purine metabolism; ppGpp biosynthesis; ppGpp from GTP: step 2/2. Functionally, catalyzes the conversion of pppGpp to ppGpp. Guanosine pentaphosphate (pppGpp) is a cytoplasmic signaling molecule which together with ppGpp controls the 'stringent response', an adaptive process that allows bacteria to respond to amino acid starvation, resulting in the coordinated regulation of numerous cellular activities. The chain is Guanosine-5'-triphosphate,3'-diphosphate pyrophosphatase from Shigella flexneri.